The following is a 465-amino-acid chain: Protein hedgehog (465 aa).

Cys79 is lipidated: N-palmitoyl cysteine. Glu143, Glu144, Asp149, Thr179, Glu180, Asp183, and Asp185 together coordinate Ca(2+). Gly251 is lipidated: Cholesterol glycine ester.

It belongs to the hedgehog family. In terms of assembly, interacts with shf. In terms of processing, the C-terminal part of the hedgehog protein precursor displays an autoproteolysis activity that results in the cleavage of the full-length protein into two parts (N-product and C-product). In addition, the C-terminal part displays a cholesterol transferase activity that results by the covalent attachment of a cholesterol moiety to the C-terminal of the newly generated N-product. The N-product is the active species in both local and long-range signaling, whereas the C-product has no signaling activity. Cholesterylation is required for N-product targeting to lipid rafts and multimerization. Post-translationally, N-palmitoylation by Rasp of the hedgehog N-product, within the secretory pathway, is required for the embryonic and larval patterning activities of the hedgehog signal.

It is found in the nucleus. The protein resides in the cytoplasm. Its subcellular location is the cell membrane. It carries out the reaction glycyl-L-cysteinyl-[protein] + cholesterol + H(+) = [protein]-C-terminal glycyl cholesterol ester + N-terminal L-cysteinyl-[protein]. The C-terminal part of the hedgehog protein precursor displays an autoproteolysis activity that results in the cleavage of the full-length protein into two parts (N-product and C-product). In addition, the C-terminal part displays a cholesterol transferase activity that results by the covalent attachment of a cholesterol moiety to the C-terminal of the newly generated N-product. Once cleaved, the C-product has no signaling activity and diffuses from the cell. Its function is as follows. The dually lipidated hedgehog protein N-product is a morphogen which is essential for a variety of patterning events during development. Establishes the anterior-posterior axis of the embryonic segments and patterns the larval imaginal disks. Binds to the patched (ptc) receptor, which functions in association with smoothened (smo), to activate the transcription of target genes wingless (wg), decapentaplegic (dpp) and ptc. In the absence of hh, ptc represses the constitutive signaling activity of smo through fused (fu). Essential component of a signaling pathway which regulates the Duox-dependent gut immune response to bacterial uracil; required to activate Cad99C-dependent endosome formation, norpA-dependent Ca2+ mobilization and p38 MAPK, which are essential steps in the Duox-dependent production of reactive oxygen species (ROS) in response to intestinal bacterial infection. During photoreceptor differentiation, it up-regulates transcription of Ubr3, which in turn promotes the hh-signaling pathway by mediating the ubiquitination and degradation of cos. The sequence is that of Protein hedgehog from Drosophila sechellia (Fruit fly).